A 118-amino-acid chain; its full sequence is Large ribosomal subunit protein bL17 (118 aa).

Belongs to the bacterial ribosomal protein bL17 family. As to quaternary structure, part of the 50S ribosomal subunit. Contacts protein L32.

In Onion yellows phytoplasma (strain OY-M), this protein is Large ribosomal subunit protein bL17.